We begin with the raw amino-acid sequence, 632 residues long: Protein EAP1 (632 aa).

3 disordered regions span residues 1–80 (MELN…KKNK), 149–204 (MGPP…DDEE), and 248–313 (KSKG…PSLS). Polar residues-rich tracts occupy residues 7–38 (SIIS…SNLF) and 54–69 (VESS…ATSG). Ser-30 is subject to Phosphoserine. A phosphoserine mark is found at Ser-281 and Ser-282. Positions 288–298 (NLKRQDKKEES) are enriched in basic and acidic residues. Residues Ser-327 and Ser-344 each carry the phosphoserine modification. The segment at 347–378 (SLPSLDNNNQVPSSNVSVVNNDGNSTPHQSGS) is disordered. Low complexity predominate over residues 353–371 (NNNQVPSSNVSVVNNDGNS). The residue at position 387 (Ser-387) is a Phosphoserine. 2 disordered regions span residues 429 to 541 (QHPP…PPPP) and 587 to 632 (QGNF…KNIK). 440 to 447 (GLLNKGKS) is a binding site for ATP. Residues 474-486 (PNFPQRMMPPPPG) are compositionally biased toward pro residues. Over residues 492 to 505 (KDSKDVNKKEDRQL) the composition is skewed to basic and acidic residues. 3 stretches are compositionally biased toward polar residues: residues 507–516 (QNKNPNGTRN), 590–603 (FPPN…SNSP), and 610–621 (INANGKNVTNQL).

Interacts with SMY2, SYH1 and eIF4E.

The protein resides in the cytoplasm. Functionally, can regulate translation through binding to eIF4E. Competes with eIF4G and p20 for binding to eIF4E in vivo and inhibits cap-dependent translation in vitro. Plays a role in cell growth and is implicated in the TOR signaling cascade. Functions independently of eIF4E to maintain genetic stability and to attenuate GCN4 translation upon TOR inactivation. The sequence is that of Protein EAP1 (EAP1) from Saccharomyces cerevisiae (strain ATCC 204508 / S288c) (Baker's yeast).